Consider the following 643-residue polypeptide: 1-deoxy-D-xylulose-5-phosphate synthase (643 aa).

Thiamine diphosphate is bound by residues His71 and 112–114 (SHA). Asp144 lines the Mg(2+) pocket. Thiamine diphosphate-binding positions include 145–146 (GA), Asn173, Tyr284, and Glu365. Asn173 is a binding site for Mg(2+).

The protein belongs to the transketolase family. DXPS subfamily. Homodimer. Mg(2+) is required as a cofactor. It depends on thiamine diphosphate as a cofactor.

It carries out the reaction D-glyceraldehyde 3-phosphate + pyruvate + H(+) = 1-deoxy-D-xylulose 5-phosphate + CO2. The protein operates within metabolic intermediate biosynthesis; 1-deoxy-D-xylulose 5-phosphate biosynthesis; 1-deoxy-D-xylulose 5-phosphate from D-glyceraldehyde 3-phosphate and pyruvate: step 1/1. Its function is as follows. Catalyzes the acyloin condensation reaction between C atoms 2 and 3 of pyruvate and glyceraldehyde 3-phosphate to yield 1-deoxy-D-xylulose-5-phosphate (DXP). The polypeptide is 1-deoxy-D-xylulose-5-phosphate synthase (Mycobacterium leprae (strain Br4923)).